Reading from the N-terminus, the 507-residue chain is Anaerobic nitric oxide reductase transcription regulator NorR (507 aa).

At Asp-57 the chain carries 4-aspartylphosphate. A Sigma-54 factor interaction domain is found at 188-417 (IIGLSSVMQQ…LEHSIYRAAI (230 aa)). Residues 216-223 (GETGVGKE) and 279-288 (ADNGTLFLDE) each bind ATP. The segment at residues 483–502 (WAATARKLELDSGNLHRLAK) is a DNA-binding region (H-T-H motif).

It functions in the pathway nitrogen metabolism; nitric oxide reduction. Required for the expression of anaerobic nitric oxide (NO) reductase, acts as a transcriptional activator for at least the norVW operon. Activation also requires sigma-54. This chain is Anaerobic nitric oxide reductase transcription regulator NorR, found in Serratia proteamaculans (strain 568).